The primary structure comprises 404 residues: LL-diaminopimelate aminotransferase (404 aa).

The substrate site is built by Tyr-15 and Gly-42. Pyridoxal 5'-phosphate-binding positions include Tyr-72, 108 to 109, Tyr-132, Asn-188, Tyr-219, and 247 to 249; these read AK and SFS. 3 residues coordinate substrate: Lys-109, Tyr-132, and Asn-188. Position 250 is an N6-(pyridoxal phosphate)lysine (Lys-250). Residues Arg-258 and Asn-288 each coordinate pyridoxal 5'-phosphate. Substrate is bound by residues Asn-288 and Arg-384.

This sequence belongs to the class-I pyridoxal-phosphate-dependent aminotransferase family. LL-diaminopimelate aminotransferase subfamily. As to quaternary structure, homodimer. It depends on pyridoxal 5'-phosphate as a cofactor.

It catalyses the reaction (2S,6S)-2,6-diaminopimelate + 2-oxoglutarate = (S)-2,3,4,5-tetrahydrodipicolinate + L-glutamate + H2O + H(+). Its pathway is amino-acid biosynthesis; L-lysine biosynthesis via DAP pathway; LL-2,6-diaminopimelate from (S)-tetrahydrodipicolinate (aminotransferase route): step 1/1. Involved in the synthesis of meso-diaminopimelate (m-DAP or DL-DAP), required for both lysine and peptidoglycan biosynthesis. Catalyzes the direct conversion of tetrahydrodipicolinate to LL-diaminopimelate. The protein is LL-diaminopimelate aminotransferase of Agathobacter rectalis (strain ATCC 33656 / DSM 3377 / JCM 17463 / KCTC 5835 / VPI 0990) (Eubacterium rectale).